The chain runs to 1165 residues: Error-prone DNA polymerase (1165 aa).

Residues 1111 to 1165 (SEGLARPPLPTGADLYEPLTYEPLNGDRRDNPDAPAQRLRHPRDVRILPPSRDFH) are disordered. The segment covering 1152–1165 (PRDVRILPPSRDFH) has biased composition (basic and acidic residues).

It belongs to the DNA polymerase type-C family. DnaE2 subfamily.

Its subcellular location is the cytoplasm. The catalysed reaction is DNA(n) + a 2'-deoxyribonucleoside 5'-triphosphate = DNA(n+1) + diphosphate. DNA polymerase involved in damage-induced mutagenesis and translesion synthesis (TLS). It is not the major replicative DNA polymerase. This Rhodopseudomonas palustris (strain HaA2) protein is Error-prone DNA polymerase.